The sequence spans 252 residues: Aspartate/glutamate leucyltransferase (252 aa).

The protein belongs to the R-transferase family. Bpt subfamily.

It is found in the cytoplasm. It carries out the reaction N-terminal L-glutamyl-[protein] + L-leucyl-tRNA(Leu) = N-terminal L-leucyl-L-glutamyl-[protein] + tRNA(Leu) + H(+). The enzyme catalyses N-terminal L-aspartyl-[protein] + L-leucyl-tRNA(Leu) = N-terminal L-leucyl-L-aspartyl-[protein] + tRNA(Leu) + H(+). In terms of biological role, functions in the N-end rule pathway of protein degradation where it conjugates Leu from its aminoacyl-tRNA to the N-termini of proteins containing an N-terminal aspartate or glutamate. This Xanthomonas campestris pv. campestris (strain B100) protein is Aspartate/glutamate leucyltransferase.